Consider the following 385-residue polypeptide: Hemagglutinin-esterase (385 aa).

Positions 1-11 are cleaved as a signal peptide; that stretch reads MLIIFLFFNFC. Residues 1-121 form an esterase domain 1 region; the sequence is MLIIFLFFNF…SNDVWIFNKV (121 aa). The Virion surface portion of the chain corresponds to 12–361; the sequence is YGFNEPLNVV…LNCFYDPLPI (350 aa). Ser34 functions as the Nucleophile in the catalytic mechanism. A disulfide bond links Cys38 and Cys59. Residues Asn83, Asn110, Asn145, Asn171, Asn196, and Asn251 are each glycosylated (N-linked (GlcNAc...) asparagine; by host). Cys107 and Cys155 are disulfide-bonded. Residues 122 to 239 are receptor binding; the sequence is RFYRALYSNM…GSYKIFSTGF (118 aa). 2 cysteine pairs are disulfide-bonded: Cys183/Cys249 and Cys191/Cys222. The interval 240 to 352 is esterase domain 2; the sequence is VLSIPTKALC…NCPTSAYIKL (113 aa). Cys280 and Cys285 are joined by a disulfide. Asn289 carries an N-linked (GlcNAc...) asparagine; by host glycan. Catalysis depends on charge relay system residues Asp299 and His302. A disulfide bridge links Cys320 with Cys344. Residue Asn331 is glycosylated (N-linked (GlcNAc...) asparagine; by host). Residues 362-382 form a helical membrane-spanning segment; it reads ILQGILLFLALLFIVFLLFLV. Residues 383-385 lie on the Intravirion side of the membrane; that stretch reads YHG.

It belongs to the influenza type C/coronaviruses hemagglutinin-esterase family. As to quaternary structure, homodimer; disulfide-linked. Forms a complex with the M protein in the pre-Golgi. Associates then with S-M complex to form a ternary complex S-M-HE. N-glycosylated in the host RER.

The protein localises to the virion membrane. It localises to the host cell membrane. The enzyme catalyses N-acetyl-9-O-acetylneuraminate + H2O = N-acetylneuraminate + acetate + H(+). The catalysed reaction is N-acetyl-4-O-acetylneuraminate + H2O = N-acetylneuraminate + acetate + H(+). Structural protein that makes short spikes at the surface of the virus. Contains receptor binding and receptor-destroying activities. Mediates de-O-acetylation of N-acetyl-4-O-acetylneuraminic acid, which is probably the receptor determinant recognized by the virus on the surface of erythrocytes and susceptible cells. This receptor-destroying activity is important for virus release as it probably helps preventing self-aggregation and ensures the efficient spread of the progeny virus from cell to cell. May serve as a secondary viral attachment protein for initiating infection, the spike protein being the major one. May become a target for both the humoral and the cellular branches of the immune system. This Human coronavirus HKU1 (isolate N2) (HCoV-HKU1) protein is Hemagglutinin-esterase.